The sequence spans 401 residues: ADP-forming sulfoacetate-CoA ligase subunit SqwK (401 aa).

One can recognise an ATP-grasp domain in the interval 9–217 (KTVFSEHKIP…DNSVFRQPRF (209 aa)). 35-96 (KSVGFPSVVK…EEAVHIDKEI (62 aa)) is a binding site for ATP. The Mg(2+) site is built by Glu185 and Asn187.

The protein belongs to the succinate/malate CoA ligase beta subunit family. In terms of assembly, forms a complex with SqwL. It depends on Mg(2+) as a cofactor.

The catalysed reaction is sulfoacetate + ATP + CoA = sulfoacetyl-CoA + ADP + phosphate. Functionally, part of a variant of the sulfo-TK pathway, a D-sulfoquinovose degradation pathway that produces sulfoacetate. Hydrolyzes sulfoacetyl-coenzyme A (sulfoacetyl-CoA) to produce sulfoacetate and CoA coupled with the phosphorylation of ADP to generate ATP. Cannot use succinate, acetate or 3-hydroxypropionate, and shows only residual activities with malonate and 3-sulfopropanoate. The protein is ADP-forming sulfoacetate-CoA ligase subunit SqwK of Acholeplasma sp.